The primary structure comprises 78 residues: D-alanyl carrier protein (78 aa).

One can recognise a Carrier domain in the interval 1-78 (MAFRENVLEI…MIITQLEALK (78 aa)). Ser-36 is subject to O-(pantetheine 4'-phosphoryl)serine.

The protein belongs to the DltC family. Post-translationally, 4'-phosphopantetheine is transferred from CoA to a specific serine of apo-DCP.

It is found in the cytoplasm. The protein operates within cell wall biogenesis; lipoteichoic acid biosynthesis. Carrier protein involved in the D-alanylation of lipoteichoic acid (LTA). The loading of thioester-linked D-alanine onto DltC is catalyzed by D-alanine--D-alanyl carrier protein ligase DltA. The DltC-carried D-alanyl group is further transferred to cell membrane phosphatidylglycerol (PG) by forming an ester bond, probably catalyzed by DltD. D-alanylation of LTA plays an important role in modulating the properties of the cell wall in Gram-positive bacteria, influencing the net charge of the cell wall. The polypeptide is D-alanyl carrier protein (Listeria welshimeri serovar 6b (strain ATCC 35897 / DSM 20650 / CCUG 15529 / CIP 8149 / NCTC 11857 / SLCC 5334 / V8)).